The chain runs to 618 residues: DNA mismatch repair protein MutL (618 aa).

The disordered stretch occupies residues 367-402 (EPTTAREPATPRYSGGASGGNGGRQTAGGWPHAQPG). A compositionally biased stretch (gly residues) spans 382–392 (GASGGNGGRQT).

This sequence belongs to the DNA mismatch repair MutL/HexB family.

Its function is as follows. This protein is involved in the repair of mismatches in DNA. It is required for dam-dependent methyl-directed DNA mismatch repair. May act as a 'molecular matchmaker', a protein that promotes the formation of a stable complex between two or more DNA-binding proteins in an ATP-dependent manner without itself being part of a final effector complex. This chain is DNA mismatch repair protein MutL, found in Salmonella paratyphi A (strain ATCC 9150 / SARB42).